We begin with the raw amino-acid sequence, 485 residues long: Auxin transporter protein 1 (485 aa).

At 1–59 (MSEGVEAIVANDNGTDQVNGNRTGKDNEEHDGSTGSNLSNFLWHGGSVWDAWFSCASNQ) the chain is on the cytoplasmic side. The span at 12-22 (DNGTDQVNGNR) shows a compositional bias: polar residues. The tract at residues 12-33 (DNGTDQVNGNRTGKDNEEHDGS) is disordered. Over residues 23–32 (TGKDNEEHDG) the composition is skewed to basic and acidic residues. A helical membrane pass occupies residues 60–77 (VAQVLLTLPYSFSQLGML). Topologically, residues 78–79 (SG) are extracellular. A helical membrane pass occupies residues 80-100 (IVLQIFYGLLGSWTAYLISVL). Residues 101-135 (YVEYRARKEKEGKSFKNHVIQWFEVLDGLLGSYWK) are Cytoplasmic-facing. Residues 136–156 (ALGLAFNCTFLLFGSVIQLIA) form a helical membrane-spanning segment. Residues 157-172 (CASNIYYINDHLDKRT) are Extracellular-facing. Residues 173–193 (WTYIFGACCATTVFIPSFHNY) form a helical membrane-spanning segment. Topologically, residues 194–196 (RIW) are cytoplasmic. A helical transmembrane segment spans residues 197–217 (SFLGLGMTTYTAWYLAIASII). Residues 218–232 (HGQAEGVKHSGPTKL) lie on the Extracellular side of the membrane. Residues 233–253 (VLYFTGATNILYTFGGHAVTV) traverse the membrane as a helical segment. At 254–266 (EIMHAMWKPQKFK) the chain is on the cytoplasmic side. A helical membrane pass occupies residues 267–287 (YIYLMATLYVFTLTIPSAAAV). Residues 288-314 (YWAFGDALLDHSNAFSLMPKNAWRDAA) are Extracellular-facing. Residues 315–335 (VILMLIHQFITFGFACTPLYF) form a helical membrane-spanning segment. Residues 336–356 (VWEKVIGMHDTKSICLRALAR) lie on the Cytoplasmic side of the membrane. The chain crosses the membrane as a helical span at residues 357–377 (LPVVIPIWFLAIIFPFFGPIN). A topological domain (extracellular) is located at residue serine 378. Residues 379-399 (AVGALLVSFTVYIIPSLAHML) traverse the membrane as a helical segment. The Cytoplasmic segment spans residues 400-425 (TYRSASARQNAAEKPPFFMPSWTAMY). A helical membrane pass occupies residues 426-446 (VLNAFVVVWVLIVGFGFGGWA). Over 447–485 (SVTNFVRQVDTFGLFAKCYQCKPAAAAAHAPVSALHHRL) the chain is Extracellular.

Belongs to the amino acid/polyamine transporter 2 family. Amino acid/auxin permease (AAAP) (TC 2.A.18.1) subfamily. As to expression, expressed in root and shoot apical tissues. In root apex, confined to stele initials, protophloem poles, statolith-containing S2 columella cells, lateral root cap cells (LRC), and in epidermal cells from the distal elongation zone (DEZ) up to central elongation zone (CEZ).

The protein localises to the cell membrane. Auxin uptake mediated by AUX1 is inhibited by chromosaponin-1 (CSI), 1-naphthoxyacetic acid (1-NOA) and 3-chloro-4-hydroxyphenylacetic acid (CHPAA). Functionally, carrier protein involved in proton-driven auxin influx. Mediates the formation of auxin gradient from developing leaves (site of auxin biosynthesis) to tips by contributing to the loading of auxin in vascular tissues and facilitating acropetal (base to tip) auxin transport within inner tissues of the root apex, and basipetal (tip to base) auxin transport within outer tissues of the root apex. Unloads auxin from the mature phloem to deliver the hormone to the root meristem via the protophloem cell files. Coordinated subcellular localization of AUX1 is regulated by a brefeldin A-sensitive (BFA) vesicle trafficking process. Involved in lateral root formation, trichoblast polarization and root hair elongation. Required for gravitropism and thigmotropism, especially in roots, by modulating responses to auxin, ethylene and cytokinins such as benzyladenine (BA). Needed for ammonium-mediated root-growth inhibition. Confers sensitivity to the herbicide 2,4-dichlorophenoxyacetic acid (2,4-D, auxin analog), and to polar auxin transport inhibitors such as N-1-naphthylphthalamic acid (NPA) and 2,3,5-triiodobenzoic acid (TIBA). The protein is Auxin transporter protein 1 (AUX1) of Arabidopsis thaliana (Mouse-ear cress).